The following is a 512-amino-acid chain: Probable cobyric acid synthase (512 aa).

Residues Ser275–Ala460 form the GATase cobBQ-type domain. Cys353 functions as the Nucleophile in the catalytic mechanism. His452 is an active-site residue.

It belongs to the CobB/CobQ family. CobQ subfamily.

Its pathway is cofactor biosynthesis; adenosylcobalamin biosynthesis. Catalyzes amidations at positions B, D, E, and G on adenosylcobyrinic A,C-diamide. NH(2) groups are provided by glutamine, and one molecule of ATP is hydrogenolyzed for each amidation. The sequence is that of Probable cobyric acid synthase from Halobacterium salinarum (strain ATCC 29341 / DSM 671 / R1).